The chain runs to 111 residues: Large ribosomal subunit protein uL22 (111 aa).

Belongs to the universal ribosomal protein uL22 family. In terms of assembly, part of the 50S ribosomal subunit.

In terms of biological role, this protein binds specifically to 23S rRNA; its binding is stimulated by other ribosomal proteins, e.g. L4, L17, and L20. It is important during the early stages of 50S assembly. It makes multiple contacts with different domains of the 23S rRNA in the assembled 50S subunit and ribosome. Its function is as follows. The globular domain of the protein is located near the polypeptide exit tunnel on the outside of the subunit, while an extended beta-hairpin is found that lines the wall of the exit tunnel in the center of the 70S ribosome. The polypeptide is Large ribosomal subunit protein uL22 (Clostridium novyi (strain NT)).